Consider the following 564-residue polypeptide: Putative zinc metalloproteinase in scaA 5'region (564 aa).

One can recognise a Peptidase M13 domain in the interval 1 to 564; the sequence is MTRLQDDFYD…KEADFSAEEF (564 aa). H478 provides a ligand contact to Zn(2+). Residue E479 is part of the active site. Residues H482 and E538 each contribute to the Zn(2+) site. D542 acts as the Proton donor in catalysis.

It belongs to the peptidase M13 family. Zn(2+) is required as a cofactor.

This Streptococcus gordonii (strain Challis / ATCC 35105 / BCRC 15272 / CH1 / DL1 / V288) protein is Putative zinc metalloproteinase in scaA 5'region.